We begin with the raw amino-acid sequence, 88 residues long: Protein WIR1A (88 aa).

The Cytoplasmic portion of the chain corresponds to 1–13; the sequence is MASLGSSAGGRRP. The helical transmembrane segment at 14 to 35 threads the bilayer; it reads TVLLQIALFVVVAAIIINSSVC. Topologically, residues 36–88 are extracellular; that stretch reads LGATAVHDAAASGTGALDPNVPAVPTPGGAGQPYTGRGCRTVYGCRPPAGGQP.

Its subcellular location is the membrane. Its function is as follows. Associated with pathogen defense. This Triticum aestivum (Wheat) protein is Protein WIR1A (WIR1A).